A 438-amino-acid polypeptide reads, in one-letter code: Coenzyme A disulfide reductase (438 aa).

8–33 (GAVAGGATCASQIRRLDKESDIIIFE) is a binding site for FAD. Residues threonine 15, glutamine 19, arginine 22, serine 39, and asparagine 42 each contribute to the substrate site. Residue cysteine 43 is the Nucleophile of the active site. The active-site Redox-active is cysteine 43. A substrate-binding site is contributed by lysine 71. 151–166 (VLVVGAGYVSLEVLEN) is an NADP(+) binding site. Residue 267–277 (TNVPNIYAIGD) coordinates FAD. Histidine 299 is a substrate binding site. Position 419 (tyrosine 419) interacts with FAD. Lysine 427 is a binding site for substrate.

The protein belongs to the class-III pyridine nucleotide-disulfide oxidoreductase family. Homodimer. FAD is required as a cofactor.

The enzyme catalyses NADP(+) + 2 CoA = CoA-disulfide + NADPH + H(+). In terms of biological role, catalyzes specifically the NADPH-dependent reduction of coenzyme A disulfide. Is also active with other disulfide substrates containing at least one 4'-phosphopantethienyl moiety such as 4,4'-diphosphopantethine, but is not able to reduce oxidized glutathione, cystine, pantethine, or H(2)O(2). This Staphylococcus aureus (strain NCTC 8325 / PS 47) protein is Coenzyme A disulfide reductase (cdr).